A 96-amino-acid chain; its full sequence is MDLATMLQNLVTEGGSIGWGLYYLGKLLGAGVAMGIGAIGPGVGEGNIGAHAMDAMARQPEMSGNLTTRMLLAMAVTESTGLYSLVVALILLFVLP.

The next 2 helical transmembrane spans lie at 28–50 (LGAG…NIGA) and 75–95 (AVTE…LFVL).

Belongs to the ATPase C chain family. F-type ATPases have 2 components, F(1) - the catalytic core - and F(0) - the membrane proton channel. F(1) has five subunits: alpha(3), beta(3), gamma(1), delta(1), epsilon(1). F(0) has three main subunits: a(1), b(2) and c(10-14). The alpha and beta chains form an alternating ring which encloses part of the gamma chain. F(1) is attached to F(0) by a central stalk formed by the gamma and epsilon chains, while a peripheral stalk is formed by the delta and b chains.

It localises to the cell inner membrane. F(1)F(0) ATP synthase produces ATP from ADP in the presence of a proton or sodium gradient. F-type ATPases consist of two structural domains, F(1) containing the extramembraneous catalytic core and F(0) containing the membrane proton channel, linked together by a central stalk and a peripheral stalk. During catalysis, ATP synthesis in the catalytic domain of F(1) is coupled via a rotary mechanism of the central stalk subunits to proton translocation. Its function is as follows. Key component of the F(0) channel; it plays a direct role in translocation across the membrane. A homomeric c-ring of between 10-14 subunits forms the central stalk rotor element with the F(1) delta and epsilon subunits. This Petrotoga mobilis (strain DSM 10674 / SJ95) protein is ATP synthase subunit c.